The sequence spans 656 residues: MISSASGTNWNRPDSFKGTQCRNIIIHGYCKFENEGCQFNHGNSKETEGQTTDEVPTQRSMTPLNVKFNAKTSSSFTPGKSPAVRSPDFSSLPAFQPGAPVNDQPMLADGPQISGTMSPSLMNSNATAFAPSFNPYASESFTPSVSAGGIPSSQELAGTLHGSNPSIPSPVPSNPYVNSAGLPSGGMLGVGHPMQGLPPPPPPGALPVNPITQFPTVYPPTHSVLQYHLYAPDPPPHLKIPLKPNERTPETLFINNHLRDRLVKNNQTALQVFPRGSLPDIVGDYFGLVPMDFHNRTSDKKRYNGHKNSLYKVFSNLDGKIYFMRRIHDVKITDSAQVSKPFQTWSHLRSANITVLKDSFVTSAFNDSSLCMVFDYYPQSQSLYETYGLANSVNELNQEYLWAFLVQLTIALQEVHSNGLALNDLDWKKVIVTGEPGRIKVTDIGVYDTLNYHQEGRMLHTEQQQNYLSLAELLLNLVQRLCGASGPLDDVKSYHIDPLFKKCIQYLQDTSNNNKNIEDFTKLFSHKVLSVVNSLQYNSEYLEQQLSRELENARLFRLMCKLNAIYGRLESRIDINWAESGEKFPIILFFDYVFHQKDDTGKNVMDLTHVLRCLNKLDAGVSERLMLVTPDEMNCIIISYKELKDLIDSTFRALTQ.

The C3H1-type zinc-finger motif lies at 15–44 (SFKGTQCRNIIIHGYCKFENEGCQFNHGNS). The disordered stretch occupies residues 71 to 104 (KTSSSFTPGKSPAVRSPDFSSLPAFQPGAPVNDQ). The PABPC-interacting motif-2 (PAM-2) motif lies at 128–148 (AFAPSFNPYASESFTPSVSAG). The tract at residues 271 to 525 (QVFPRGSLPD…NIEDFTKLFS (255 aa)) is pseudokinase domain. ATP contacts are provided by residues Arg-325, 375–382 (DYYPQSQS), and 428–429 (KK). Positions 526 to 564 (HKVLSVVNSLQYNSEYLEQQLSRELENARLFRLMCKLNA) form a coiled coil. A knob domain region spans residues 565-656 (IYGRLESRID…IDSTFRALTQ (92 aa)).

This sequence belongs to the protein kinase superfamily. PAN3 family. As to quaternary structure, homodimer. Forms a heterotrimer with a catalytic subunit PAN2 to form the poly(A)-nuclease (PAN) deadenylation complex. Interacts (via PAM-2 motif) with poly(A)-binding protein PAB1 (via PABC domain), conferring substrate specificity of the enzyme complex.

The protein localises to the cytoplasm. In terms of biological role, regulatory subunit of the poly(A)-nuclease (PAN) deadenylation complex, one of two cytoplasmic mRNA deadenylases involved in mRNA turnover. PAN specifically shortens poly(A) tails of RNA and the activity is stimulated by poly(A)-binding protein PAB1. PAN deadenylation is followed by rapid degradation of the shortened mRNA tails by the CCR4-NOT complex. Deadenylated mRNAs are then degraded by two alternative mechanisms, namely exosome-mediated 3'-5' exonucleolytic degradation, or deadenylation-dependent mRNA decaping and subsequent 5'-3' exonucleolytic degradation by XRN1. May also be involved in post-transcriptional maturation of mRNA poly(A) tails. PAN3 acts as a positive regulator for PAN activity, recruiting the catalytic subunit PAN2 to mRNA via its interaction with RNA and with PAB1. The polypeptide is PAN2-PAN3 deadenylation complex subunit PAN3 (Kluyveromyces lactis (strain ATCC 8585 / CBS 2359 / DSM 70799 / NBRC 1267 / NRRL Y-1140 / WM37) (Yeast)).